The following is a 236-amino-acid chain: GTP cyclohydrolase 1 (236 aa).

The tract at residues 1–52 is disordered; that stretch reads MAAARSCNGYARREGPPSPKLGTEKPRVSAGSGGSGDGWRGERPRSEEDNEL. Residues Cys-127, His-130, and Cys-198 each contribute to the Zn(2+) site.

It belongs to the GTP cyclohydrolase I family. Toroid-shaped homodecamer, composed of two pentamers of five dimers.

It localises to the cytoplasm. It is found in the nucleus. The enzyme catalyses GTP + H2O = 7,8-dihydroneopterin 3'-triphosphate + formate + H(+). Its pathway is cofactor biosynthesis; 7,8-dihydroneopterin triphosphate biosynthesis; 7,8-dihydroneopterin triphosphate from GTP: step 1/1. GTP shows a positive allosteric effect, and tetrahydrobiopterin inhibits the enzyme activity. Zinc is required for catalytic activity. Inhibited by Mg(2+). In terms of biological role, may positively regulate nitric oxide synthesis in endothelial cells. May be involved in dopamine synthesis. May modify pain sensitivity and persistence. The polypeptide is GTP cyclohydrolase 1 (GCH1) (Gallus gallus (Chicken)).